Consider the following 331-residue polypeptide: tRNA uridine(34) hydroxylase (331 aa).

Positions 123 to 217 (TDPEVLLIDT…YLEDVPQEES (95 aa)) constitute a Rhodanese domain. C177 acts as the Cysteine persulfide intermediate in catalysis. A disordered region spans residues 293–331 (KSRGEEHIGSEAAKAIKKRQAEKKLKRKNYHQHLTQGAE). The span at 307-323 (AIKKRQAEKKLKRKNYH) shows a compositional bias: basic residues.

It belongs to the TrhO family.

The enzyme catalyses uridine(34) in tRNA + AH2 + O2 = 5-hydroxyuridine(34) in tRNA + A + H2O. Catalyzes oxygen-dependent 5-hydroxyuridine (ho5U) modification at position 34 in tRNAs. The chain is tRNA uridine(34) hydroxylase from Hahella chejuensis (strain KCTC 2396).